The primary structure comprises 285 residues: Bifunctional protein FolD (285 aa).

Residues 166–168 and Ile-232 contribute to the NADP(+) site; that span reads GAS.

This sequence belongs to the tetrahydrofolate dehydrogenase/cyclohydrolase family. Homodimer.

It catalyses the reaction (6R)-5,10-methylene-5,6,7,8-tetrahydrofolate + NADP(+) = (6R)-5,10-methenyltetrahydrofolate + NADPH. It carries out the reaction (6R)-5,10-methenyltetrahydrofolate + H2O = (6R)-10-formyltetrahydrofolate + H(+). Its pathway is one-carbon metabolism; tetrahydrofolate interconversion. Its function is as follows. Catalyzes the oxidation of 5,10-methylenetetrahydrofolate to 5,10-methenyltetrahydrofolate and then the hydrolysis of 5,10-methenyltetrahydrofolate to 10-formyltetrahydrofolate. In Psychromonas ingrahamii (strain DSM 17664 / CCUG 51855 / 37), this protein is Bifunctional protein FolD.